A 393-amino-acid polypeptide reads, in one-letter code: MQFDTIELAIEALRNGESIIVVDDEDRENEGDLVAVTEWMDDNTINFMAREGRGLICAPIDKSIAERLKLQSMEQNNTDIYGTHFTVSIDHYKTTTGISAHERTQTARALIDENTNPEDFHRPGHLFPLIAKENGVLTRNGHTEAAVDLARLTGAQPAGVICEIMNDDGTMAKGEDLQSFKERHHLKMITIKSLVAFRKAVELNVNLKAKVKMPTDFGHFDMYGFTTNYSDEEIVAIVKGDLKSNPNVRMHSACLTGDIFHSQRCDCGAQLEASMKYIDEHGGMIIYLPQEGRGIGLINKLRAYELIEKGYDTVTANLALGFDEDLRDYHVAAEILKYFDISEINLLSNNPKKFEGLEDYGIEIVDRIELIVPETQYNHSYMETKKNKMGHLI.

A DHBP synthase region spans residues 1–200; it reads MQFDTIELAI…IKSLVAFRKA (200 aa). Residues 27-28, Asp-32, 139-143, and Glu-163 each bind D-ribulose 5-phosphate; these read RE and RNGHT. Glu-28 serves as a coordination point for Mg(2+). His-142 is a Mg(2+) binding site. Residues 201–393 form a GTP cyclohydrolase II region; the sequence is VELNVNLKAK…TKKNKMGHLI (193 aa). 249 to 253 contacts GTP; it reads RMHSA. Zn(2+)-binding residues include Cys-254, Cys-265, and Cys-267. GTP is bound by residues Gln-270, 291–293, and Thr-313; that span reads EGR. Asp-325 serves as the catalytic Proton acceptor; for GTP cyclohydrolase activity. Arg-327 serves as the catalytic Nucleophile; for GTP cyclohydrolase activity. Residues Ser-348 and Lys-353 each coordinate GTP.

The protein in the N-terminal section; belongs to the DHBP synthase family. This sequence in the C-terminal section; belongs to the GTP cyclohydrolase II family. The cofactor is Mg(2+). It depends on Mn(2+) as a cofactor. Zn(2+) is required as a cofactor.

It carries out the reaction D-ribulose 5-phosphate = (2S)-2-hydroxy-3-oxobutyl phosphate + formate + H(+). The catalysed reaction is GTP + 4 H2O = 2,5-diamino-6-hydroxy-4-(5-phosphoribosylamino)-pyrimidine + formate + 2 phosphate + 3 H(+). It functions in the pathway cofactor biosynthesis; riboflavin biosynthesis; 2-hydroxy-3-oxobutyl phosphate from D-ribulose 5-phosphate: step 1/1. The protein operates within cofactor biosynthesis; riboflavin biosynthesis; 5-amino-6-(D-ribitylamino)uracil from GTP: step 1/4. In terms of biological role, catalyzes the conversion of D-ribulose 5-phosphate to formate and 3,4-dihydroxy-2-butanone 4-phosphate. Catalyzes the conversion of GTP to 2,5-diamino-6-ribosylamino-4(3H)-pyrimidinone 5'-phosphate (DARP), formate and pyrophosphate. The chain is Riboflavin biosynthesis protein RibBA from Staphylococcus epidermidis (strain ATCC 35984 / DSM 28319 / BCRC 17069 / CCUG 31568 / BM 3577 / RP62A).